A 452-amino-acid chain; its full sequence is Putative tripartite motif-containing protein 49B (452 aa).

The RING-type zinc-finger motif lies at cysteine 15–threonine 56. The B box-type zinc-finger motif lies at serine 88–isoleucine 129. Cysteine 93, histidine 96, cysteine 115, and histidine 121 together coordinate Zn(2+). One can recognise a B30.2/SPRY domain in the interval glutamate 269–phenylalanine 452.

It belongs to the TRIM/RBCC family.

This Homo sapiens (Human) protein is Putative tripartite motif-containing protein 49B (TRIM49B).